A 406-amino-acid polypeptide reads, in one-letter code: Endoglucanase 1 (406 aa).

The signal sequence occupies residues 1-43 (MNSKKIGAMIAAAVLSLIVMTPAATRKIVQRQTRNSSTAVENS). Composition is skewed to polar residues over residues 30–41 (QRQTRNSSTAVE) and 51–62 (ENVPVSQTHTND). The tract at residues 30-62 (QRQTRNSSTAVENSAADESETENVPVSQTHTND) is disordered. Glu210 acts as the Proton donor in catalysis. Glu330 serves as the catalytic Nucleophile.

It belongs to the glycosyl hydrolase 5 (cellulase A) family.

The enzyme catalyses Endohydrolysis of (1-&gt;4)-beta-D-glucosidic linkages in cellulose, lichenin and cereal beta-D-glucans.. The protein is Endoglucanase 1 (Eg I) of Ruminococcus albus.